The primary structure comprises 180 residues: Small ribosomal subunit protein uS4 (180 aa).

One can recognise an S4 RNA-binding domain in the interval 104–166; it reads RRLQTIVHRK…PTSPFKNNPP (63 aa). Residues 155 to 180 are disordered; it reads FYPTSPFKNNPPTAGQGEVNVEQKGN.

The protein belongs to the universal ribosomal protein uS4 family. As to quaternary structure, part of the 30S ribosomal subunit. Contacts protein S5. The interaction surface between S4 and S5 is involved in control of translational fidelity.

Its function is as follows. One of the primary rRNA binding proteins, it binds directly to 16S rRNA where it nucleates assembly of the body of the 30S subunit. Functionally, with S5 and S12 plays an important role in translational accuracy. The polypeptide is Small ribosomal subunit protein uS4 (Metallosphaera sedula (strain ATCC 51363 / DSM 5348 / JCM 9185 / NBRC 15509 / TH2)).